The primary structure comprises 420 residues: UDP-N-acetylglucosamine 1-carboxyvinyltransferase (420 aa).

Residue 22 to 23 (KN) participates in phosphoenolpyruvate binding. Arg93 serves as a coordination point for UDP-N-acetyl-alpha-D-glucosamine. The Proton donor role is filled by Cys117. Cys117 carries the 2-(S-cysteinyl)pyruvic acid O-phosphothioketal modification. UDP-N-acetyl-alpha-D-glucosamine is bound by residues Asp307 and Ile329.

It belongs to the EPSP synthase family. MurA subfamily.

It localises to the cytoplasm. The catalysed reaction is phosphoenolpyruvate + UDP-N-acetyl-alpha-D-glucosamine = UDP-N-acetyl-3-O-(1-carboxyvinyl)-alpha-D-glucosamine + phosphate. It functions in the pathway cell wall biogenesis; peptidoglycan biosynthesis. In terms of biological role, cell wall formation. Adds enolpyruvyl to UDP-N-acetylglucosamine. In Alteromonas mediterranea (strain DSM 17117 / CIP 110805 / LMG 28347 / Deep ecotype), this protein is UDP-N-acetylglucosamine 1-carboxyvinyltransferase.